The chain runs to 329 residues: Prostaglandin reductase 1 (329 aa).

T18 carries the phosphothreonine modification. S20 carries the phosphoserine modification. NADP(+) contacts are provided by residues 152–155 (GAVG), K178, Y193, N217, 239–245 (CGAISVY), 270–272 (FVV), and N321. Residue K178 is modified to N6-(2-hydroxyisobutyryl)lysine; alternate. N6-acetyllysine; alternate is present on K178.

Belongs to the NADP-dependent oxidoreductase L4BD family. Monomer or homodimer.

It is found in the cytoplasm. It catalyses the reaction 13,14-dihydro-15-oxo-prostaglandin E1 + NADP(+) = 15-oxoprostaglandin E1 + NADPH + H(+). The catalysed reaction is 13,14-dihydro-15-oxo-prostaglandin E2 + NADP(+) = 15-oxoprostaglandin E2 + NADPH + H(+). The enzyme catalyses 13,14-dihydro-15-oxo-prostaglandin F1alpha + NADP(+) = 15-oxoprostaglandin F1alpha + NADPH + H(+). It carries out the reaction 13,14-dihydro-15-oxo-PGF2alpha + NADP(+) = 15-oxoprostaglandin F2alpha + NADPH + H(+). It catalyses the reaction leukotriene B4 + NADP(+) = 12-oxo-leukotriene B4 + NADPH + H(+). The catalysed reaction is 20-hydroxy-leukotriene B4 + NADP(+) = 12-oxo-20-hydroxy-leukotriene B4 + NADPH + H(+). The enzyme catalyses 6-trans-leukotriene B4 + NADP(+) = 12-oxo-(5S)-hydroxy-(6E,8E,10E,14Z)-eicosatetraenoate + NADPH + H(+). It carries out the reaction (5S,12S)-dihydroxy-(6E,10E,12E,14Z)-eicosatetraenoate + NADP(+) = 12-oxo-(5S)-hydroxy-(6E,8E,10E,14Z)-eicosatetraenoate + NADPH + H(+). It catalyses the reaction an n-alkanal + NADP(+) = an alk-2-enal + NADPH + H(+). The catalysed reaction is hexanal + NADP(+) = (E)-hex-2-enal + NADPH + H(+). The enzyme catalyses octanal + NADP(+) = (2E)-octenal + NADPH + H(+). It carries out the reaction decanal + NADP(+) = (2E)-decenal + NADPH + H(+). It catalyses the reaction dodecanal + NADP(+) = (2E)-dodecenal + NADPH + H(+). The catalysed reaction is 4-hydroxynonanal + NADP(+) = (E)-4-hydroxynon-2-enal + NADPH + H(+). The enzyme catalyses pentan-2-one + NADP(+) = (E)-pent-3-en-2-one + NADPH + H(+). It carries out the reaction nonan-2-one + NADP(+) = (3E)-nonen-2-one + NADPH + H(+). In terms of biological role, NAD(P)H-dependent oxidoreductase involved in metabolic inactivation of pro- and anti-inflammatory eicosanoids: prostaglandins (PG), leukotrienes (LT) and lipoxins (LX). Catalyzes with high efficiency the reduction of the 13,14 double bond of 15-oxoPGs, including 15-oxo-PGE1, 15-oxo-PGE2, 15-oxo-PGF1-alpha and 15-oxo-PGF2-alpha. Catalyzes with lower efficiency the oxidation of the hydroxyl group at C12 of LTB4 and its derivatives, converting them into biologically less active 12-oxo-LTB4 metabolites. Reduces 15-oxo-LXA4 to 13,14 dihydro-15-oxo-LXA4, enhancing neutrophil recruitment at the inflammatory site. Plays a role in metabolic detoxification of alkenals and ketones. Reduces alpha,beta-unsaturated alkenals and ketones, particularly those with medium-chain length, showing highest affinity toward (2E)-decenal and (3E)-3-nonen-2-one. May inactivate 4-hydroxy-2-nonenal, a cytotoxic lipid constituent of oxidized low-density lipoprotein particles. This Bos taurus (Bovine) protein is Prostaglandin reductase 1 (PTGR1).